Consider the following 87-residue polypeptide: Large ribosomal subunit protein bL31B (87 aa).

The protein belongs to the bacterial ribosomal protein bL31 family. Type B subfamily. In terms of assembly, part of the 50S ribosomal subunit.

This Halorhodospira halophila (strain DSM 244 / SL1) (Ectothiorhodospira halophila (strain DSM 244 / SL1)) protein is Large ribosomal subunit protein bL31B.